A 464-amino-acid chain; its full sequence is tRNA-2-methylthio-N(6)-dimethylallyladenosine synthase (464 aa).

Residues methionine 1 to proline 25 form a disordered region. The 116-residue stretch at arginine 27 to glycine 142 folds into the MTTase N-terminal domain. Positions 36, 72, 105, 180, 184, and 187 each coordinate [4Fe-4S] cluster. The Radical SAM core domain occupies alanine 166 to glutamate 398. In terms of domain architecture, TRAM spans alanine 401 to alanine 464.

This sequence belongs to the methylthiotransferase family. MiaB subfamily. Monomer. Requires [4Fe-4S] cluster as cofactor.

Its subcellular location is the cytoplasm. The enzyme catalyses N(6)-dimethylallyladenosine(37) in tRNA + (sulfur carrier)-SH + AH2 + 2 S-adenosyl-L-methionine = 2-methylsulfanyl-N(6)-dimethylallyladenosine(37) in tRNA + (sulfur carrier)-H + 5'-deoxyadenosine + L-methionine + A + S-adenosyl-L-homocysteine + 2 H(+). Catalyzes the methylthiolation of N6-(dimethylallyl)adenosine (i(6)A), leading to the formation of 2-methylthio-N6-(dimethylallyl)adenosine (ms(2)i(6)A) at position 37 in tRNAs that read codons beginning with uridine. The sequence is that of tRNA-2-methylthio-N(6)-dimethylallyladenosine synthase from Anaeromyxobacter dehalogenans (strain 2CP-C).